The following is a 292-amino-acid chain: uncharacterized protein (292 aa).

Catalysis depends on charge relay system residues S44 and Y106. The active-site Proton donor is Y132. Catalysis depends on K161, which acts as the Schiff-base intermediate with substrate.

Belongs to the DapA family. Homotetramer.

The protein localises to the cytoplasm. This is an uncharacterized protein from Thermoplasma acidophilum (strain ATCC 25905 / DSM 1728 / JCM 9062 / NBRC 15155 / AMRC-C165).